A 396-amino-acid polypeptide reads, in one-letter code: Pinosylvin synthase 1 (396 aa).

Residue 60-63 (KFKR) coordinates substrate. Cys-170 is an active-site residue. Residues Leu-273 and 311-313 (GGH) each bind substrate.

Belongs to the thiolase-like superfamily. Chalcone/stilbene synthases family. Homodimer.

The protein localises to the cytoplasm. It carries out the reaction (E)-cinnamoyl-CoA + 3 malonyl-CoA + 3 H(+) = (E)-pinosylvin + 4 CO2 + 4 CoA. The enzyme catalyses 3-phenylpropanoyl-CoA + 3 malonyl-CoA + 3 H(+) = dihydropinosylvin + 4 CO2 + 4 CoA. It participates in phytoalexin biosynthesis; pinosylvin biosynthesis. Functionally, catalyzes the production of pinosylvin from cinnamoyl-CoA and malonyl-CoA, and dihydropinosylvin from dihydrocinnamoyl-CoA. The protein is Pinosylvin synthase 1 of Pinus strobus (Eastern white pine).